A 145-amino-acid chain; its full sequence is D-aminoacyl-tRNA deacylase (145 aa).

The Gly-cisPro motif, important for rejection of L-amino acids motif lies at 137–138 (GP).

It belongs to the DTD family. Homodimer.

Its subcellular location is the cytoplasm. It carries out the reaction glycyl-tRNA(Ala) + H2O = tRNA(Ala) + glycine + H(+). It catalyses the reaction a D-aminoacyl-tRNA + H2O = a tRNA + a D-alpha-amino acid + H(+). Functionally, an aminoacyl-tRNA editing enzyme that deacylates mischarged D-aminoacyl-tRNAs. Also deacylates mischarged glycyl-tRNA(Ala), protecting cells against glycine mischarging by AlaRS. Acts via tRNA-based rather than protein-based catalysis; rejects L-amino acids rather than detecting D-amino acids in the active site. By recycling D-aminoacyl-tRNA to D-amino acids and free tRNA molecules, this enzyme counteracts the toxicity associated with the formation of D-aminoacyl-tRNA entities in vivo and helps enforce protein L-homochirality. The polypeptide is D-aminoacyl-tRNA deacylase (Lactobacillus acidophilus (strain ATCC 700396 / NCK56 / N2 / NCFM)).